A 53-amino-acid polypeptide reads, in one-letter code: uncharacterized protein (53 aa).

A run of 2 helical transmembrane segments spans residues 3–22 and 26–45; these read LFGMIFLIATVAFILLGVLL and AFFFVSILTLIAAIVLFTVL.

The protein resides in the cell membrane. This is an uncharacterized protein from Bacillus subtilis (strain 168).